A 273-amino-acid polypeptide reads, in one-letter code: MIFLLLMLSLELQLHQIAALFTVTVPKELYIIEHGSNVTLECNFDTGSHVNLGAITASLQKVENDTSPHRERATLLEEQLPLGKASFHIPQVQVRDEGQYQCIIIYGVAWDYKYLTLKVKASYRKINTHILKVPETDEVELTCQATGYPLAEVSWPNVSVPANTSHSRTPEGLYQVTSVLRLKPPPGRNFSCVFWNTHVRELTLASIDLQSQMEPRTHPTWLLHIFIPFCIIAFIFIATVIALRKQLCQKLYSSKDTTKRPVTTTKREVNSAI.

A signal peptide spans Met-1 to Ala-19. Residues Leu-20–Thr-220 are Extracellular-facing. Positions Phe-21 to Lys-118 constitute an Ig-like V-type domain. N-linked (GlcNAc...) asparagine glycosylation is found at Asn-37, Asn-64, Asn-157, Asn-163, and Asn-189. 2 disulfide bridges follow: Cys-42–Cys-102 and Cys-143–Cys-192. Residues Ser-122–Thr-203 enclose the Ig-like C2-type domain. The chain crosses the membrane as a helical span at residues Trp-221–Ile-241. At Ala-242–Ile-273 the chain is on the cytoplasmic side.

This sequence belongs to the immunoglobulin superfamily. BTN/MOG family. Interacts with PDCD1. As to expression, highly expressed in heart, placenta, pancreas, lung and liver and weakly expressed in spleen, lymph nodes and thymus.

Its subcellular location is the secreted. The protein localises to the endomembrane system. It is found in the cell membrane. Involved in the costimulatory signal, essential for T-cell proliferation and IFNG production in a PDCD1-independent manner. Interaction with PDCD1 inhibits T-cell proliferation by blocking cell cycle progression and cytokine production. The polypeptide is Programmed cell death 1 ligand 2 (PDCD1LG2) (Homo sapiens (Human)).